The sequence spans 330 residues: Virulence plasmid integrase pGP8-D (330 aa).

The Core-binding (CB) domain occupies 39–124 (FSLFEVIMHW…SYISLTRFLN (86 aa)). A Tyr recombinase domain is found at 152–327 (VKTNAMNRLQ…SREDNASKKM (176 aa)). Active-site residues include Arg189, Lys214, His279, Arg282, and His305. Tyr314 functions as the O-(3'-phospho-DNA)-tyrosine intermediate in the catalytic mechanism.

The protein belongs to the 'phage' integrase family.

This Chlamydia muridarum (strain MoPn / Nigg) protein is Virulence plasmid integrase pGP8-D.